Reading from the N-terminus, the 329-residue chain is Sulfate/thiosulfate import ATP-binding protein CysA (329 aa).

Residues 3-237 (IEVRNVSKRF…PANDFVYHFL (235 aa)) enclose the ABC transporter domain. ATP is bound at residue 35 to 42 (GPSGCGKT).

It belongs to the ABC transporter superfamily. Sulfate/tungstate importer (TC 3.A.1.6) family. In terms of assembly, the complex is composed of two ATP-binding proteins (CysA), two transmembrane proteins (CysT and CysW) and a solute-binding protein (CysP).

It localises to the cell inner membrane. It carries out the reaction sulfate(out) + ATP + H2O = sulfate(in) + ADP + phosphate + H(+). It catalyses the reaction thiosulfate(out) + ATP + H2O = thiosulfate(in) + ADP + phosphate + H(+). In terms of biological role, part of the ABC transporter complex CysAWTP involved in sulfate/thiosulfate import. Responsible for energy coupling to the transport system. In Pseudomonas putida (strain ATCC 47054 / DSM 6125 / CFBP 8728 / NCIMB 11950 / KT2440), this protein is Sulfate/thiosulfate import ATP-binding protein CysA.